The chain runs to 495 residues: Glutamyl-tRNA(Gln) amidotransferase subunit A (495 aa).

Residues K78 and S158 each act as charge relay system in the active site. S182 serves as the catalytic Acyl-ester intermediate.

It belongs to the amidase family. GatA subfamily. In terms of assembly, heterotrimer of A, B and C subunits.

The catalysed reaction is L-glutamyl-tRNA(Gln) + L-glutamine + ATP + H2O = L-glutaminyl-tRNA(Gln) + L-glutamate + ADP + phosphate + H(+). Its function is as follows. Allows the formation of correctly charged Gln-tRNA(Gln) through the transamidation of misacylated Glu-tRNA(Gln) in organisms which lack glutaminyl-tRNA synthetase. The reaction takes place in the presence of glutamine and ATP through an activated gamma-phospho-Glu-tRNA(Gln). The sequence is that of Glutamyl-tRNA(Gln) amidotransferase subunit A from Dinoroseobacter shibae (strain DSM 16493 / NCIMB 14021 / DFL 12).